Reading from the N-terminus, the 119-residue chain is Endocuticle structural glycoprotein SgAbd-3 (119 aa).

Residue Q1 is modified to Pyrrolidone carboxylic acid. The Chitin-binding type R&amp;R domain maps to 24-98 (DGSYRYSFET…PQGAHLPTPP (75 aa)). Positions 33–55 (TSDGQRASQEGALKQVSAPGPDG) are disordered. An O-linked (HexNAc...) threonine glycan is attached at T96.

Component of the abdominal endocuticle. The sequence is that of Endocuticle structural glycoprotein SgAbd-3 from Schistocerca gregaria (Desert locust).